The following is a 156-amino-acid chain: Small ribosomal subunit protein uS7 (156 aa).

The protein belongs to the universal ribosomal protein uS7 family. In terms of assembly, part of the 30S ribosomal subunit. Contacts proteins S9 and S11.

In terms of biological role, one of the primary rRNA binding proteins, it binds directly to 16S rRNA where it nucleates assembly of the head domain of the 30S subunit. Is located at the subunit interface close to the decoding center, probably blocks exit of the E-site tRNA. This is Small ribosomal subunit protein uS7 from Kocuria rhizophila (strain ATCC 9341 / DSM 348 / NBRC 103217 / DC2201).